A 185-amino-acid chain; its full sequence is Stathmin-4 (185 aa).

Residues 48 to 185 (SDMEVIELNK…EVRKNKEATR (138 aa)) enclose the SLD domain. Positions 90–185 (SLEEIQKKLE…EVRKNKEATR (96 aa)) form a coiled coil. Residues 165-185 (ERLQEKDKHAEEVRKNKEATR) form a disordered region. The segment covering 166–185 (RLQEKDKHAEEVRKNKEATR) has biased composition (basic and acidic residues).

Belongs to the stathmin family. In terms of tissue distribution, nervous tissue.

This chain is Stathmin-4 (stmn4), found in Xenopus laevis (African clawed frog).